A 556-amino-acid polypeptide reads, in one-letter code: Sphingomyelinase C (556 aa).

An N-terminal signal peptide occupies residues 1–27 (MRIKKYTKVRLLVNCCLLLFFLIDCGA).

Its subcellular location is the secreted. It catalyses the reaction a sphingomyelin + H2O = phosphocholine + an N-acylsphing-4-enine + H(+). The protein is Sphingomyelinase C (sph) of Leptospira interrogans.